The following is a 352-amino-acid chain: MTIAVGRAPQERGWFDVLDDWLKRDRFVFVGWSGILLFPCAFMALGGWLTGTTFVTSWYTHGLASSYLEGCNFLTVAVSSPADSLGHSLLFLWGPEANWNFARWCQLGGLWSFVALHGAFGLIGFMLRQFEIARLVGIRPYNAIAFSGPIAVFVSVFLMYPLGQSSWFFAPSFGVAGIFRFILFLQGFHNWTLNPFHMMGVAGILGGALLCAIHGATVENTLFEDSDQANTFRAFEPTQAEETYSMVTANRFWSQIFGIAFSNKRWLHFFMLFVPVTGLWMSSVGIVGLALNLRAYDFVSQEIRAAEDPEFETFYTKNILLNEGMRAWMAPQDQIHEQFVFPEEVLPRGNAL.

A helical transmembrane segment spans residues 40-60 (CAFMALGGWLTGTTFVTSWYT). Position 117 (H117) interacts with chlorophyll a. A helical membrane pass occupies residues 124–140 (GFMLRQFEIARLVGIRP). Positions 129 and 142 each coordinate pheophytin a. Residues 152 to 165 (VFVSVFLMYPLGQS) traverse the membrane as a helical segment. A chlorophyll a-binding site is contributed by H197. A helical membrane pass occupies residues 207–227 (GALLCAIHGATVENTLFEDSD). 2 residues coordinate a plastoquinone: H214 and F261. H214 contacts Fe cation. H268 provides a ligand contact to Fe cation. Residues 278–294 (GLWMSSVGIVGLALNLR) traverse the membrane as a helical segment.

Belongs to the reaction center PufL/M/PsbA/D family. In terms of assembly, PSII is composed of 1 copy each of membrane proteins PsbA, PsbB, PsbC, PsbD, PsbE, PsbF, PsbH, PsbI, PsbJ, PsbK, PsbL, PsbM, PsbT, PsbX, PsbY, PsbZ, Psb30/Ycf12, peripheral proteins PsbO, CyanoQ (PsbQ), PsbU, PsbV and a large number of cofactors. It forms dimeric complexes. The D1/D2 heterodimer binds P680, chlorophylls that are the primary electron donor of PSII, and subsequent electron acceptors. It shares a non-heme iron and each subunit binds pheophytin, quinone, additional chlorophylls, carotenoids and lipids. There is also a Cl(-1) ion associated with D1 and D2, which is required for oxygen evolution. The PSII complex binds additional chlorophylls, carotenoids and specific lipids. serves as cofactor.

The protein resides in the cellular thylakoid membrane. It catalyses the reaction 2 a plastoquinone + 4 hnu + 2 H2O = 2 a plastoquinol + O2. Functionally, photosystem II (PSII) is a light-driven water:plastoquinone oxidoreductase that uses light energy to abstract electrons from H(2)O, generating O(2) and a proton gradient subsequently used for ATP formation. It consists of a core antenna complex that captures photons, and an electron transfer chain that converts photonic excitation into a charge separation. The D1/D2 (PsbA/PsbD) reaction center heterodimer binds P680, the primary electron donor of PSII as well as several subsequent electron acceptors. D2 is needed for assembly of a stable PSII complex. In Picosynechococcus sp. (strain ATCC 27264 / PCC 7002 / PR-6) (Agmenellum quadruplicatum), this protein is Photosystem II D2 protein.